The primary structure comprises 160 residues: Lipoprotein signal peptidase (160 aa).

The next 3 membrane-spanning stretches (helical) occupy residues 5 to 25 (LVFF…KFII), 60 to 80 (IEWL…AFFI), and 84 to 104 (LPFL…AGTV). Active-site residues include aspartate 118 and aspartate 132. A helical membrane pass occupies residues 128 to 148 (FNIADSCLTVGVIGLLLLYIV).

Belongs to the peptidase A8 family.

The protein localises to the cell membrane. It carries out the reaction Release of signal peptides from bacterial membrane prolipoproteins. Hydrolyzes -Xaa-Yaa-Zaa-|-(S,diacylglyceryl)Cys-, in which Xaa is hydrophobic (preferably Leu), and Yaa (Ala or Ser) and Zaa (Gly or Ala) have small, neutral side chains.. It functions in the pathway protein modification; lipoprotein biosynthesis (signal peptide cleavage). This protein specifically catalyzes the removal of signal peptides from prolipoproteins. The sequence is that of Lipoprotein signal peptidase from Dehalococcoides mccartyi (strain ATCC BAA-2100 / JCM 16839 / KCTC 5957 / BAV1).